A 130-amino-acid polypeptide reads, in one-letter code: Fluoride-specific ion channel FluC (130 aa).

Helical transmembrane passes span 2 to 22 (GLLL…RFAL), 36 to 56 (GILL…AFLI), 71 to 91 (FLLV…SLDI), and 100 to 120 (IFIA…AVIL). 2 residues coordinate Na(+): Gly79 and Thr82.

This sequence belongs to the fluoride channel Fluc/FEX (TC 1.A.43) family.

The protein resides in the cell inner membrane. The enzyme catalyses fluoride(in) = fluoride(out). With respect to regulation, na(+) is not transported, but it plays an essential structural role and its presence is essential for fluoride channel function. In terms of biological role, fluoride-specific ion channel. Important for reducing fluoride concentration in the cell, thus reducing its toxicity. The protein is Fluoride-specific ion channel FluC of Francisella tularensis subsp. tularensis (strain FSC 198).